Reading from the N-terminus, the 552-residue chain is Urocanate hydratase (552 aa).

NAD(+)-binding positions include 49-50 (GG), Gln-127, 173-175 (GMG), Glu-193, Arg-198, 239-240 (NA), 260-264 (QTSAH), 270-271 (YI), and Tyr-319. Residue Cys-407 is part of the active site. Residue Gly-489 coordinates NAD(+).

This sequence belongs to the urocanase family. It depends on NAD(+) as a cofactor.

The protein localises to the cytoplasm. The catalysed reaction is 4-imidazolone-5-propanoate = trans-urocanate + H2O. The protein operates within amino-acid degradation; L-histidine degradation into L-glutamate; N-formimidoyl-L-glutamate from L-histidine: step 2/3. Catalyzes the conversion of urocanate to 4-imidazolone-5-propionate. This is Urocanate hydratase from Geobacillus sp. (strain WCH70).